The primary structure comprises 612 residues: Chaperone protein DnaK (612 aa).

Thr173 is modified (phosphothreonine; by autocatalysis). Positions 576–612 (AAKQAQAQQDGGAGAKKADDNVVDAEYEEVNDDKDQK) are disordered. Residues 596–612 (NVVDAEYEEVNDDKDQK) are compositionally biased toward acidic residues.

It belongs to the heat shock protein 70 family.

In terms of biological role, acts as a chaperone. The polypeptide is Chaperone protein DnaK (Bacillus licheniformis (strain ATCC 14580 / DSM 13 / JCM 2505 / CCUG 7422 / NBRC 12200 / NCIMB 9375 / NCTC 10341 / NRRL NRS-1264 / Gibson 46)).